A 238-amino-acid chain; its full sequence is Ribonuclease PH (238 aa).

Phosphate is bound by residues Arg-86 and 124–126; that span reads GTR.

It belongs to the RNase PH family. As to quaternary structure, homohexameric ring arranged as a trimer of dimers.

It catalyses the reaction tRNA(n+1) + phosphate = tRNA(n) + a ribonucleoside 5'-diphosphate. Its function is as follows. Phosphorolytic 3'-5' exoribonuclease that plays an important role in tRNA 3'-end maturation. Removes nucleotide residues following the 3'-CCA terminus of tRNAs; can also add nucleotides to the ends of RNA molecules by using nucleoside diphosphates as substrates, but this may not be physiologically important. Probably plays a role in initiation of 16S rRNA degradation (leading to ribosome degradation) during starvation. The protein is Ribonuclease PH of Azorhizobium caulinodans (strain ATCC 43989 / DSM 5975 / JCM 20966 / LMG 6465 / NBRC 14845 / NCIMB 13405 / ORS 571).